A 506-amino-acid polypeptide reads, in one-letter code: Nucleosome assembly protein 1-like 3 (506 aa).

2 disordered regions span residues 1-95 (MAEA…LGTN) and 157-307 (PTEE…KRED). Residues 35-70 (SSSSSSSTSDSSSSSSTSGSSSGSGSSSSSSGSTSS) show a composition bias toward low complexity. The segment covering 157–178 (PTEEECEWNSEDEEFSSDEEVQ) has biased composition (acidic residues). The span at 196-296 (PKENPEVKAE…ERLQDSVDLK (101 aa)) shows a compositional bias: basic and acidic residues.

The protein belongs to the nucleosome assembly protein (NAP) family.

The protein resides in the nucleus. This Homo sapiens (Human) protein is Nucleosome assembly protein 1-like 3 (NAP1L3).